Consider the following 203-residue polypeptide: Orotate phosphoribosyltransferase (203 aa).

Residues R94, K98, H100, and 120 to 128 (EDLISTGGS) each bind 5-phospho-alpha-D-ribose 1-diphosphate. Residue S124 coordinates orotate.

It belongs to the purine/pyrimidine phosphoribosyltransferase family. PyrE subfamily. In terms of assembly, homodimer. Requires Mg(2+) as cofactor.

It carries out the reaction orotidine 5'-phosphate + diphosphate = orotate + 5-phospho-alpha-D-ribose 1-diphosphate. Its pathway is pyrimidine metabolism; UMP biosynthesis via de novo pathway; UMP from orotate: step 1/2. Its function is as follows. Catalyzes the transfer of a ribosyl phosphate group from 5-phosphoribose 1-diphosphate to orotate, leading to the formation of orotidine monophosphate (OMP). The sequence is that of Orotate phosphoribosyltransferase from Staphylococcus saprophyticus subsp. saprophyticus (strain ATCC 15305 / DSM 20229 / NCIMB 8711 / NCTC 7292 / S-41).